We begin with the raw amino-acid sequence, 336 residues long: Ferredoxin--NADP reductase (336 aa).

Positions 34, 42, 47, 87, 121, 286, and 326 each coordinate FAD.

It belongs to the ferredoxin--NADP reductase type 2 family. Homodimer. The cofactor is FAD.

It catalyses the reaction 2 reduced [2Fe-2S]-[ferredoxin] + NADP(+) + H(+) = 2 oxidized [2Fe-2S]-[ferredoxin] + NADPH. The protein is Ferredoxin--NADP reductase of Leuconostoc mesenteroides subsp. mesenteroides (strain ATCC 8293 / DSM 20343 / BCRC 11652 / CCM 1803 / JCM 6124 / NCDO 523 / NBRC 100496 / NCIMB 8023 / NCTC 12954 / NRRL B-1118 / 37Y).